The following is a 141-amino-acid chain: 3-hydroxyacyl-[acyl-carrier-protein] dehydratase FabZ (141 aa).

Residue His48 is part of the active site.

It belongs to the thioester dehydratase family. FabZ subfamily.

It is found in the cytoplasm. The catalysed reaction is a (3R)-hydroxyacyl-[ACP] = a (2E)-enoyl-[ACP] + H2O. In terms of biological role, involved in unsaturated fatty acids biosynthesis. Catalyzes the dehydration of short chain beta-hydroxyacyl-ACPs and long chain saturated and unsaturated beta-hydroxyacyl-ACPs. This Streptococcus thermophilus (strain CNRZ 1066) protein is 3-hydroxyacyl-[acyl-carrier-protein] dehydratase FabZ.